Reading from the N-terminus, the 572-residue chain is Alpha-1D adrenergic receptor (572 aa).

A disordered region spans residues 1-77 (MTFRDLLSVS…SAGEPGSAGA (77 aa)). Residues 1–95 (MTFRDLLSVS…AVGGLVVSAQ (95 aa)) are Extracellular-facing. 2 stretches are compositionally biased toward gly residues: residues 23–33 (SSAGGGGGSAG) and 42–61 (AVGG…GAGS). N65 and N82 each carry an N-linked (GlcNAc...) asparagine glycan. The chain crosses the membrane as a helical span at residues 96–121 (GVGVGVFLAAFILMAVAGNLLVILSV). Residues 122–133 (ACNRHLQTVTNY) are Cytoplasmic-facing. Residues 134 to 159 (FIVNLAVADLLLSATVLPFSATMEVL) form a helical membrane-spanning segment. The Extracellular portion of the chain corresponds to 160 to 169 (GFWAFGRAFC). A helical transmembrane segment spans residues 170-192 (DVWAAVDVLCCTASILSLCTISV). The Cytoplasmic segment spans residues 193-213 (DRYVGVRHSLKYPAIMTERKA). Residues 214–238 (AAILALLWVVALVVSVGPLLGWKEP) form a helical membrane-spanning segment. The Extracellular segment spans residues 239-251 (VPPDERFCGITEE). The helical transmembrane segment at 252 to 275 (AGYAVFSSVCSFYLPMAVIVVMYC) threads the bilayer. At 276-348 (RVYVVARSTT…KFSREKKAAK (73 aa)) the chain is on the cytoplasmic side. The helical transmembrane segment at 349 to 373 (TLAIVVGVFVLCWFPFFFVLPLGSL) threads the bilayer. Topologically, residues 374-380 (FPQLKPS) are extracellular. Residues 381 to 405 (EGVFKVIFWLGYFNSCVNPLIYPCS) form a helical membrane-spanning segment. Residues 406–572 (SREFKRAFLR…DYSNLRETDI (167 aa)) lie on the Cytoplasmic side of the membrane. C419 carries S-palmitoyl cysteine lipidation. Positions 444 to 488 (GLRQDCAPSSGDAPPGAPLALTALPDPDPEPPGTPEMQAPVASRR) are disordered. The span at 450–468 (APSSGDAPPGAPLALTALP) shows a compositional bias: low complexity.

It belongs to the G-protein coupled receptor 1 family. Adrenergic receptor subfamily. ADRA1D sub-subfamily. As to quaternary structure, interacts with FLNA (via filamin repeat 21); increases PKA-mediated phosphorylation of FLNA. Palmitoylated. Palmitoylation by ZDHHC21 may increase the expression of the receptor and regulate downstream signaling.

It is found in the cell membrane. In terms of biological role, this alpha-adrenergic receptor mediates its effect through the influx of extracellular calcium. The polypeptide is Alpha-1D adrenergic receptor (ADRA1D) (Homo sapiens (Human)).